Reading from the N-terminus, the 190-residue chain is Transcription factor E (190 aa).

Residues 4–87 (KNKALLEIAK…YWHLETKRLP (84 aa)) form the HTH TFE/IIEalpha-type domain. The interval 170-190 (PSPKKEKKKTRAKAKRKTRKK) is disordered. Basic residues predominate over residues 174 to 190 (KEKKKTRAKAKRKTRKK).

The protein belongs to the TFE family. As to quaternary structure, monomer. Interaction with RNA polymerase subunits RpoF and RpoE is necessary for Tfe stimulatory transcription activity. Able to interact with Tbp and RNA polymerase in the absence of DNA promoter. Interacts both with the preinitiation and elongation complexes.

Its function is as follows. Transcription factor that plays a role in the activation of archaeal genes transcribed by RNA polymerase. Facilitates transcription initiation by enhancing TATA-box recognition by TATA-box-binding protein (Tbp), and transcription factor B (Tfb) and RNA polymerase recruitment. Not absolutely required for transcription in vitro, but particularly important in cases where Tbp or Tfb function is not optimal. It dynamically alters the nucleic acid-binding properties of RNA polymerases by stabilizing the initiation complex and destabilizing elongation complexes. Seems to translocate with the RNA polymerase following initiation and acts by binding to the non template strand of the transcription bubble in elongation complexes. The polypeptide is Transcription factor E (Pyrococcus abyssi (strain GE5 / Orsay)).